Here is a 211-residue protein sequence, read N- to C-terminus: FMN-dependent NADH:quinone oxidoreductase (211 aa).

FMN contacts are provided by residues 17–19 (SYS) and 102–105 (MWNF).

The protein belongs to the azoreductase type 1 family. In terms of assembly, homodimer. Requires FMN as cofactor.

It carries out the reaction 2 a quinone + NADH + H(+) = 2 a 1,4-benzosemiquinone + NAD(+). The catalysed reaction is N,N-dimethyl-1,4-phenylenediamine + anthranilate + 2 NAD(+) = 2-(4-dimethylaminophenyl)diazenylbenzoate + 2 NADH + 2 H(+). Its function is as follows. Quinone reductase that provides resistance to thiol-specific stress caused by electrophilic quinones. In terms of biological role, also exhibits azoreductase activity. Catalyzes the reductive cleavage of the azo bond in aromatic azo compounds to the corresponding amines. The sequence is that of FMN-dependent NADH:quinone oxidoreductase from Geobacillus kaustophilus (strain HTA426).